The sequence spans 135 residues: Ribosome-binding factor A (135 aa).

Belongs to the RbfA family. In terms of assembly, monomer. Binds 30S ribosomal subunits, but not 50S ribosomal subunits or 70S ribosomes.

It is found in the cytoplasm. Functionally, one of several proteins that assist in the late maturation steps of the functional core of the 30S ribosomal subunit. Associates with free 30S ribosomal subunits (but not with 30S subunits that are part of 70S ribosomes or polysomes). Required for efficient processing of 16S rRNA. May interact with the 5'-terminal helix region of 16S rRNA. In Methylobacterium nodulans (strain LMG 21967 / CNCM I-2342 / ORS 2060), this protein is Ribosome-binding factor A.